The chain runs to 340 residues: HTH-type transcriptional regulator CelR (340 aa).

Residues 1–61 form the HTH lacI-type domain; sequence MERRRRPTLE…PNRAARTLVT (61 aa). Positions 9–28 form a DNA-binding region, H-T-H motif; sequence LEMVAALAGVGRGTVSRVIN.

The protein localises to the cytoplasm. Its activity is regulated as follows. Activity is controlled by cytoplasmic cellobiose levels. Binding of CelR to the celE promoter is inhibited specifically by low concentrations of cellobiose, the major end product of cellulases. Activity may also be regulated through post-translational modification. Its function is as follows. Transcriptional regulator that regulates the expression of all six cellulases, encoded by the cel genes (designated celA through celF). Acts as a repressor. Specifically binds to a 14-bp inverted repeat site, which is present in the upstream region of the cellulase genes. This is HTH-type transcriptional regulator CelR from Thermobifida fusca (Thermomonospora fusca).